We begin with the raw amino-acid sequence, 396 residues long: MAKAKFERTKPHVNIGTIGHVDHGKTTLTAAITKVLHDAYPDLNEASAFDEIDKAPEEKARGITINISHVEYQTEKRHYAHVDAPGHADYIKNMITGAAQMDGAILVVAATDGPMPQTREHVLLARQVGVPYILVALNKADMVDDDEIIELVEMEVRELLAAQEFDEDAPVVKVSALKALEGDPEWTKNILELMAAVDESIPDPVRETEKPFLMPVEDVFTITGRGTVVTGRIERGVINVNEDVEIVGIKETKTKTTVTGIEMFRKLLDSGQAGDNVGLLVRGIKREDVERGQVVVKPGTTTPHTEFEGQAYILSKDEGGRHTPFFNNYRPQFYFRTTDVTGVVTLPEGTEMVMPGDNTEMSVKLIQPVAMDEGLRFAIREGGRTVGAGKVTKINK.

Positions 10 to 205 (KPHVNIGTIG…AVDESIPDPV (196 aa)) constitute a tr-type G domain. Residues 19–26 (GHVDHGKT) are G1. 19–26 (GHVDHGKT) is a GTP binding site. A Mg(2+)-binding site is contributed by threonine 26. Positions 62-66 (GITIN) are G2. A G3 region spans residues 83–86 (DAPG). Residues 83-87 (DAPGH) and 138-141 (NKAD) each bind GTP. The segment at 138–141 (NKAD) is G4. A G5 region spans residues 175 to 177 (SAL).

This sequence belongs to the TRAFAC class translation factor GTPase superfamily. Classic translation factor GTPase family. EF-Tu/EF-1A subfamily. As to quaternary structure, monomer.

Its subcellular location is the cytoplasm. The catalysed reaction is GTP + H2O = GDP + phosphate + H(+). In terms of biological role, GTP hydrolase that promotes the GTP-dependent binding of aminoacyl-tRNA to the A-site of ribosomes during protein biosynthesis. The protein is Elongation factor Tu of Rhodococcus jostii (strain RHA1).